The primary structure comprises 875 residues: Phosphoenolpyruvate carboxylase (875 aa).

Catalysis depends on residues histidine 137 and lysine 542.

This sequence belongs to the PEPCase type 1 family. The cofactor is Mg(2+).

The enzyme catalyses oxaloacetate + phosphate = phosphoenolpyruvate + hydrogencarbonate. Forms oxaloacetate, a four-carbon dicarboxylic acid source for the tricarboxylic acid cycle. The polypeptide is Phosphoenolpyruvate carboxylase (Pseudomonas putida (strain ATCC 47054 / DSM 6125 / CFBP 8728 / NCIMB 11950 / KT2440)).